The primary structure comprises 512 residues: FAD-linked oxidoreductase iacH (512 aa).

Residues M1–G22 form the signal peptide. N-linked (GlcNAc...) asparagine glycans are attached at residues N39, N55, N69, N210, N217, N278, N295, and N367. Residues L77–G248 enclose the FAD-binding PCMH-type domain.

The protein belongs to the oxygen-dependent FAD-linked oxidoreductase family. The cofactor is FAD.

It participates in secondary metabolite biosynthesis. In terms of biological role, FAD-linked oxidoreductase; part of the gene cluster that mediates the biosynthesis of iso-A82775C, a enylepoxycyclohexane and biosynthetic precursor of the chloropestolide anticancer natural products. Within the cluster, the prenyltransferase iacE prenylates siccayne to generate pestalodiol E, using dimethylallyl diphosphate (DMAPP) as cosubstrate. The probable oxidoreductase iacF is then involved in the epoxidation of pestalodiol F to pestalodiol F, which is further converted to pestalofone A by the short-chain dehydrogenase/reductase iacG. Iso-A82775C is subsequently generated from pestalofone A by the short-chain dehydrogenase/reductase iacC. Iso-A82775C is further condensed with maldoxin via a Diels-Alder reaction to produce the anticancer natural products chloropestolides A to E. This is FAD-linked oxidoreductase iacH from Pestalotiopsis fici (strain W106-1 / CGMCC3.15140).